A 182-amino-acid polypeptide reads, in one-letter code: Small ribosomal subunit protein uS4c (182 aa).

The 62-residue stretch at 82–143 (MRLDNILFRL…KERSKVLIQN (62 aa)) folds into the S4 RNA-binding domain.

Belongs to the universal ribosomal protein uS4 family. As to quaternary structure, part of the 30S ribosomal subunit. Contacts protein S5. The interaction surface between S4 and S5 is involved in control of translational fidelity.

The protein resides in the plastid. The protein localises to the chloroplast. Functionally, one of the primary rRNA binding proteins, it binds directly to 16S rRNA where it nucleates assembly of the body of the 30S subunit. Its function is as follows. With S5 and S12 plays an important role in translational accuracy. This Neomarica sp. (strain Lejeune 1997) protein is Small ribosomal subunit protein uS4c (rps4).